The chain runs to 364 residues: Developmentally-regulated GTP-binding protein 2 homolog (364 aa).

Positions 63–288 (ARVALIGFPS…LLDKIWDYLN (226 aa)) constitute an OBG-type G domain. GTP is bound by residues 69–76 (GFPSVGKS), 115–119 (DTPGI), and 246–249 (NKMD). The region spanning 288–363 (NLVRVYTKLR…EDEDVIQIVK (76 aa)) is the TGS domain.

This sequence belongs to the TRAFAC class OBG-HflX-like GTPase superfamily. OBG GTPase family.

The chain is Developmentally-regulated GTP-binding protein 2 homolog (drg2) from Dictyostelium discoideum (Social amoeba).